A 217-amino-acid chain; its full sequence is Pyridoxine/pyridoxamine 5'-phosphate oxidase (217 aa).

Substrate is bound by residues Arg-13 to Tyr-16 and Lys-71. FMN contacts are provided by residues Arg-66–Lys-71, Tyr-81–Thr-82, Arg-87, Lys-88, and Gln-110. The substrate site is built by Tyr-128, Arg-132, and Ser-136. FMN-binding positions include Gln-145–Ser-146 and Trp-190. Residue Arg-196–His-198 participates in substrate binding. Arg-200 provides a ligand contact to FMN.

The protein belongs to the pyridoxamine 5'-phosphate oxidase family. In terms of assembly, homodimer. FMN is required as a cofactor.

It catalyses the reaction pyridoxamine 5'-phosphate + O2 + H2O = pyridoxal 5'-phosphate + H2O2 + NH4(+). The catalysed reaction is pyridoxine 5'-phosphate + O2 = pyridoxal 5'-phosphate + H2O2. It participates in cofactor metabolism; pyridoxal 5'-phosphate salvage; pyridoxal 5'-phosphate from pyridoxamine 5'-phosphate: step 1/1. The protein operates within cofactor metabolism; pyridoxal 5'-phosphate salvage; pyridoxal 5'-phosphate from pyridoxine 5'-phosphate: step 1/1. In terms of biological role, catalyzes the oxidation of either pyridoxine 5'-phosphate (PNP) or pyridoxamine 5'-phosphate (PMP) into pyridoxal 5'-phosphate (PLP). The polypeptide is Pyridoxine/pyridoxamine 5'-phosphate oxidase (Rubrobacter xylanophilus (strain DSM 9941 / JCM 11954 / NBRC 16129 / PRD-1)).